The sequence spans 472 residues: MTNNPYQIKHFHFIGIGGIGMSGLAMVLRQRGFAVSGSDKSNNPSINNLKDLGINIFKEQAASNISQLSEDKNEQLIIVISSAIRQENEELKEAYEKNLKILHRSDILAFLIKQQYSILIAGSHGKTTTSTIITTILGKANQDPTAIIGGIVPYYNSNAYVGKGKFLIAEADESDGSLTKYDGDIGLLTNIELDHTDYYTNIDSLINTIKKFTKNCKKIVANYDCNNLRKACPDKTIWWSTNEFKNINFAAIPKIMNGQITLASYYENGKYIDDISISLPGVHNLNNTLGAIAACRSADINFSDIKPHVSSLKCPERRFQFKGIWKGRQIVDDYAHHPSEIRETLSMARLMINTKKSILPMAADRIVVIFQPHRYSRTRDLITEFAKNLGAADLVILTPIYSAGEEPIKGITSEKLKSCTLANNPNLPIFTCKQLRDLENIINLKTRENDLLLFMGAGDITKVSEKLSKKIK.

122–128 (GSHGKTT) is an ATP binding site.

This sequence belongs to the MurCDEF family.

It is found in the cytoplasm. It catalyses the reaction UDP-N-acetyl-alpha-D-muramate + L-alanine + ATP = UDP-N-acetyl-alpha-D-muramoyl-L-alanine + ADP + phosphate + H(+). It functions in the pathway cell wall biogenesis; peptidoglycan biosynthesis. Functionally, cell wall formation. In Prochlorococcus marinus (strain SARG / CCMP1375 / SS120), this protein is UDP-N-acetylmuramate--L-alanine ligase.